The sequence spans 77 residues: uncharacterized protein (77 aa).

The protein to E.coli YdfK.

This is an uncharacterized protein from Escherichia coli (strain K12).